A 183-amino-acid polypeptide reads, in one-letter code: tRNA-splicing endonuclease (183 aa).

Active-site residues include tyrosine 120, histidine 128, and lysine 159.

This sequence belongs to the tRNA-intron endonuclease family. Archaeal short subfamily. Homotetramer; although the tetramer contains four active sites, only two participate in the cleavage. Therefore, it should be considered as a dimer of dimers.

It catalyses the reaction pretRNA = a 3'-half-tRNA molecule with a 5'-OH end + a 5'-half-tRNA molecule with a 2',3'-cyclic phosphate end + an intron with a 2',3'-cyclic phosphate and a 5'-hydroxyl terminus.. Functionally, endonuclease that removes tRNA introns. Cleaves pre-tRNA at the 5'- and 3'-splice sites to release the intron. The products are an intron and two tRNA half-molecules bearing 2',3' cyclic phosphate and 5'-OH termini. Recognizes a pseudosymmetric substrate in which 2 bulged loops of 3 bases are separated by a stem of 4 bp. In Pyrobaculum islandicum (strain DSM 4184 / JCM 9189 / GEO3), this protein is tRNA-splicing endonuclease.